The sequence spans 983 residues: MTSTTGLRNLTLSFKKQLTTSTRTIMTIGDKQKWTATNVRNTFLDYFKSKEHKFVKSSPVVPFDDPTLLFANAGMNQYKPIFLGTVDPASDFYTLKRAYNSQKCIRAGGKHNDLEDVGKDSYHHTFFEMLGNWSFGDYFKKEAITYSWTLLTEVYGIPKDRLYVTYFEGDEKLGLEPDTEARELWKNVGVPDDHILPGNAKDNFWEMGDQGPCGPCSEIHYDRIGGRNAASLVNMDDPDVLEVWNLVFIQFNREQDGSLKPLPAKHIDTGMGFERLVSVLQDVRSNYDTDVFTPLFERIQEITSVRPYSGNFGENDKDGIDTAYRVLADHVRTLTFALADGGVPNNEGRGYVLRRILRRGARYARKYMNYPIGNFFSTLAPTLISQVQDIFPELAKDPAFLFEILDEEEASFAKTLDRGERLFEKYASAASKTESKTLDGKQVWRLYDTYGFPVDLTELMAEEQGLKIDGPGFEKAKQESYEASKRGGKKDQSDLIKLNVHELSELNDAKVPKTNDEFKYGSANVEGTILKLHDGTNFVDEITEPGKKYGIILDKTCFYAEQGGQEYDTGKIVIDDAAEFNVENVQLYNGFVFHTGSLEEGKLSVGDKIIASFDELRRFPIKNNHTGTHILNFALKETLGNDVDQKGSLVAPEKLRFDFSHKKAVSNEELKKVEDICNEQIKENLQVFYKEIPLDLAKSIDGVRAVFGETYPDPVRVVSVGKPIEELLANPANEEWTKYSIEFCGGTHVNKTGDIKYFVILEESGIAKGIRRIVAVTGTEAFEAQRLAEQFAADLDAADKLPFSPIKEKKLKELGVKLGQLSISVITKNELKQKFNKIEKAVKDEVKSRAKKENKQTLDEVKTFFETNENAPYLVKFIDISPNAKAITEAINYMKSNDSVKDKSIYLLAGNDPEGRVAHGCYISNAALAKGIDGSALAKKVSSIIGGKAGGKGNVFQGMGDKPAAIKDAVDDLESLFKEKLSI.

Residues Met-1 to Thr-24 constitute a mitochondrion transit peptide. Phosphoserine is present on Ser-504. Zn(2+)-binding residues include His-625, His-629, Cys-744, and His-748. A Phosphoserine modification is found at Ser-975.

This sequence belongs to the class-II aminoacyl-tRNA synthetase family. In terms of assembly, monomer. Requires Zn(2+) as cofactor.

Its subcellular location is the cytoplasm. It localises to the mitochondrion. It catalyses the reaction tRNA(Ala) + L-alanine + ATP = L-alanyl-tRNA(Ala) + AMP + diphosphate. Its function is as follows. Catalyzes the attachment of alanine to tRNA(Ala) in a two-step reaction: alanine is first activated by ATP to form Ala-AMP and then transferred to the acceptor end of tRNA(Ala). Also edits incorrectly charged tRNA(Ala) via its editing domain. This Saccharomyces cerevisiae (strain ATCC 204508 / S288c) (Baker's yeast) protein is Alanine--tRNA ligase, mitochondrial.